We begin with the raw amino-acid sequence, 692 residues long: Alpha-amylase SusG (692 aa).

A signal peptide spans 1–22 (MNKHLHFLSLLWLSMLMAFMTA). Cys-23 is lipidated: N-palmitoyl cysteine. Cys-23 carries the S-diacylglycerol cysteine lipid modification. Residues Asp-73, Asp-75, Asp-77, Tyr-79, and Asp-81 each contribute to the Mg(2+) site. Asn-153 is a binding site for Ca(2+). Starch binding stretches follow at residues His-154, 260 to 263 (YYGE), and 330 to 333 (NIMF). A Ca(2+)-binding site is contributed by Asp-352. The starch binding stretch occupies residues 386–392 (RLDAVKH). Residue Asp-388 is the Nucleophile of the active site. His-392 provides a ligand contact to Ca(2+). Glu-431 (proton donor) is an active-site residue. Residues Asp-437 and Arg-457 are each a region of interest (starch binding).

The protein belongs to the glycosyl hydrolase 13 family. In terms of assembly, monomer. The cofactor is Ca(2+).

Its subcellular location is the cell outer membrane. The catalysed reaction is Endohydrolysis of (1-&gt;4)-alpha-D-glucosidic linkages in polysaccharides containing three or more (1-&gt;4)-alpha-linked D-glucose units.. It participates in glycan degradation; starch degradation. Its function is as follows. Alpha-amylase that cleaves starch into oligosaccharides before internalization for degradation, the first step in starch degradation. In Bacteroides thetaiotaomicron (strain ATCC 29148 / DSM 2079 / JCM 5827 / CCUG 10774 / NCTC 10582 / VPI-5482 / E50), this protein is Alpha-amylase SusG (susG).